A 236-amino-acid polypeptide reads, in one-letter code: uncharacterized protein (236 aa).

The disordered stretch occupies residues 1 to 29 (MNNEKNKQDRENLNRQDERKSSEIKSERK).

This is an uncharacterized protein from Staphylococcus aureus.